We begin with the raw amino-acid sequence, 335 residues long: Probable tRNA N6-adenosine threonylcarbamoyltransferase (335 aa).

Residues H109, H113, and Y130 each coordinate a divalent metal cation. Substrate is bound by residues 130 to 134 (YVSGG), D162, G177, E181, and N266. D294 provides a ligand contact to a divalent metal cation.

It belongs to the KAE1 / TsaD family. In terms of assembly, component of the EKC/KEOPS complex; the whole complex dimerizes. It depends on a divalent metal cation as a cofactor.

It localises to the cytoplasm. It is found in the nucleus. It carries out the reaction L-threonylcarbamoyladenylate + adenosine(37) in tRNA = N(6)-L-threonylcarbamoyladenosine(37) in tRNA + AMP + H(+). Its function is as follows. Component of the EKC/KEOPS complex that is required for the formation of a threonylcarbamoyl group on adenosine at position 37 (t(6)A37) in tRNAs that read codons beginning with adenine. The complex is probably involved in the transfer of the threonylcarbamoyl moiety of threonylcarbamoyl-AMP (TC-AMP) to the N6 group of A37. Osgep likely plays a direct catalytic role in this reaction, but requires other protein(s) of the complex to fulfill this activity. The sequence is that of Probable tRNA N6-adenosine threonylcarbamoyltransferase from Nematostella vectensis (Starlet sea anemone).